We begin with the raw amino-acid sequence, 465 residues long: Ribulose bisphosphate carboxylase large chain (465 aa).

Residue K4 is modified to N6,N6,N6-trimethyllysine. N113 and T163 together coordinate substrate. The active-site Proton acceptor is K165. K167 contacts substrate. Residues K191, D193, and E194 each coordinate Mg(2+). K191 bears the N6-carboxylysine mark. H284 functions as the Proton acceptor in the catalytic mechanism. Substrate is bound by residues R285, H317, and S369.

It belongs to the RuBisCO large chain family. Type I subfamily. Heterohexadecamer of 8 large chains and 8 small chains; disulfide-linked. The disulfide link is formed within the large subunit homodimers. Mg(2+) is required as a cofactor. In terms of processing, the disulfide bond which can form in the large chain dimeric partners within the hexadecamer appears to be associated with oxidative stress and protein turnover.

It localises to the plastid. The protein localises to the chloroplast. It carries out the reaction 2 (2R)-3-phosphoglycerate + 2 H(+) = D-ribulose 1,5-bisphosphate + CO2 + H2O. The catalysed reaction is D-ribulose 1,5-bisphosphate + O2 = 2-phosphoglycolate + (2R)-3-phosphoglycerate + 2 H(+). Functionally, ruBisCO catalyzes two reactions: the carboxylation of D-ribulose 1,5-bisphosphate, the primary event in carbon dioxide fixation, as well as the oxidative fragmentation of the pentose substrate in the photorespiration process. Both reactions occur simultaneously and in competition at the same active site. The chain is Ribulose bisphosphate carboxylase large chain from Eucommia ulmoides (Hardy rubber tree).